Consider the following 156-residue polypeptide: Transcription antitermination protein NusB (156 aa).

The protein belongs to the NusB family.

In terms of biological role, involved in transcription antitermination. Required for transcription of ribosomal RNA (rRNA) genes. Binds specifically to the boxA antiterminator sequence of the ribosomal RNA (rrn) operons. The chain is Transcription antitermination protein NusB from Rickettsia felis (strain ATCC VR-1525 / URRWXCal2) (Rickettsia azadi).